The chain runs to 506 residues: ATP synthase subunit alpha (506 aa).

169–176 lines the ATP pocket; it reads GDRQTGKT.

It belongs to the ATPase alpha/beta chains family. F-type ATPases have 2 components, CF(1) - the catalytic core - and CF(0) - the membrane proton channel. CF(1) has five subunits: alpha(3), beta(3), gamma(1), delta(1), epsilon(1). CF(0) has three main subunits: a(1), b(2) and c(9-12). The alpha and beta chains form an alternating ring which encloses part of the gamma chain. CF(1) is attached to CF(0) by a central stalk formed by the gamma and epsilon chains, while a peripheral stalk is formed by the delta and b chains.

The protein resides in the cell membrane. The enzyme catalyses ATP + H2O + 4 H(+)(in) = ADP + phosphate + 5 H(+)(out). In terms of biological role, produces ATP from ADP in the presence of a proton gradient across the membrane. The alpha chain is a regulatory subunit. The polypeptide is ATP synthase subunit alpha (Acetivibrio thermocellus (strain ATCC 27405 / DSM 1237 / JCM 9322 / NBRC 103400 / NCIMB 10682 / NRRL B-4536 / VPI 7372) (Clostridium thermocellum)).